The primary structure comprises 646 residues: Macrolide export ATP-binding/permease protein MacB (646 aa).

The region spanning 7-245 (IRLEDICKTF…EATLQPHEEI (239 aa)) is the ABC transporter domain. An ATP-binding site is contributed by 43-50 (GASGSGKS). A run of 4 helical transmembrane segments spans residues 274–294 (VLTL…LAIG), 528–548 (VAAI…LVSV), 572–592 (FIIE…ILGL), and 609–629 (FGPV…FGFL).

Belongs to the ABC transporter superfamily. Macrolide exporter (TC 3.A.1.122) family. In terms of assembly, homodimer.

The protein resides in the cell inner membrane. Functionally, non-canonical ABC transporter that contains transmembrane domains (TMD), which form a pore in the inner membrane, and an ATP-binding domain (NBD), which is responsible for energy generation. Confers resistance against macrolides. The chain is Macrolide export ATP-binding/permease protein MacB from Brucella abortus (strain 2308).